A 537-amino-acid polypeptide reads, in one-letter code: Nedd4 binding protein 3 (537 aa).

Position 172 is a phosphoserine (S172). Disordered regions lie at residues 173-234 (LDEG…VLSC), 327-359 (RKEL…EEEA), and 422-456 (LQEQ…EARE). The span at 178–207 (PEPSLSDSSSGGSFGRSPGTGPSPFSSSLG) shows a compositional bias: low complexity. Positions 295-523 (VDRLHEVAQK…LEQELRVLRE (229 aa)) form a coiled coil.

The protein belongs to the N4BP3 family. In terms of assembly, binds NEDD4. Interacts with 14-3-3 proteins. Interacts with MAVS.

It localises to the cytoplasmic vesicle. Its subcellular location is the cell projection. The protein resides in the axon. The protein localises to the dendrite. Its function is as follows. Plays a positive role in the antiviral innate immune signaling pathway. Mechanistically, interacts with MAVS and functions as a positive regulator to promote 'Lys-63'-linked polyubiquitination of MAVS and thus strengthens the interaction between MAVS and TRAF2. Also plays a role in axon and dendrite arborization during cranial nerve development. May also be important for neural crest migration and early development of other anterior structures including eye, brain and cranial cartilage. The sequence is that of Nedd4 binding protein 3 from Rattus norvegicus (Rat).